Reading from the N-terminus, the 557-residue chain is 2-succinyl-5-enolpyruvyl-6-hydroxy-3-cyclohexene-1-carboxylate synthase (557 aa).

This sequence belongs to the TPP enzyme family. MenD subfamily. In terms of assembly, homodimer. The cofactor is Mg(2+). It depends on Mn(2+) as a cofactor. Requires thiamine diphosphate as cofactor.

The enzyme catalyses isochorismate + 2-oxoglutarate + H(+) = 5-enolpyruvoyl-6-hydroxy-2-succinyl-cyclohex-3-ene-1-carboxylate + CO2. It functions in the pathway quinol/quinone metabolism; 1,4-dihydroxy-2-naphthoate biosynthesis; 1,4-dihydroxy-2-naphthoate from chorismate: step 2/7. It participates in quinol/quinone metabolism; menaquinone biosynthesis. In terms of biological role, catalyzes the thiamine diphosphate-dependent decarboxylation of 2-oxoglutarate and the subsequent addition of the resulting succinic semialdehyde-thiamine pyrophosphate anion to isochorismate to yield 2-succinyl-5-enolpyruvyl-6-hydroxy-3-cyclohexene-1-carboxylate (SEPHCHC). This chain is 2-succinyl-5-enolpyruvyl-6-hydroxy-3-cyclohexene-1-carboxylate synthase, found in Staphylococcus aureus (strain MRSA252).